A 394-amino-acid chain; its full sequence is Flagellin B (394 aa).

It belongs to the bacterial flagellin family.

It localises to the secreted. The protein resides in the bacterial flagellum. Functionally, flagellin is the subunit protein which polymerizes to form the filaments of bacterial flagella. In Rhizobium meliloti (strain 1021) (Ensifer meliloti), this protein is Flagellin B (flaB).